We begin with the raw amino-acid sequence, 409 residues long: Arginine deiminase (409 aa).

The active-site Amidino-cysteine intermediate is C397.

This sequence belongs to the arginine deiminase family.

Its subcellular location is the cytoplasm. It catalyses the reaction L-arginine + H2O = L-citrulline + NH4(+). Its pathway is amino-acid degradation; L-arginine degradation via ADI pathway; carbamoyl phosphate from L-arginine: step 1/2. In Metamycoplasma hominis (Mycoplasma hominis), this protein is Arginine deiminase (arcA).